The chain runs to 442 residues: D-serine dehydratase (442 aa).

Lys-118 carries the N6-(pyridoxal phosphate)lysine modification.

The protein belongs to the serine/threonine dehydratase family. DsdA subfamily. In terms of assembly, monomer. The cofactor is pyridoxal 5'-phosphate.

The enzyme catalyses D-serine = pyruvate + NH4(+). In Escherichia coli (strain 55989 / EAEC), this protein is D-serine dehydratase.